Here is a 146-residue protein sequence, read N- to C-terminus: 3-dehydroquinate dehydratase (146 aa).

Y22 acts as the Proton acceptor in catalysis. N73, H79, and D86 together coordinate substrate. H99 serves as the catalytic Proton donor. Substrate is bound by residues 100 to 101 (IS) and R110.

It belongs to the type-II 3-dehydroquinase family. As to quaternary structure, homododecamer.

The enzyme catalyses 3-dehydroquinate = 3-dehydroshikimate + H2O. It participates in metabolic intermediate biosynthesis; chorismate biosynthesis; chorismate from D-erythrose 4-phosphate and phosphoenolpyruvate: step 3/7. Functionally, catalyzes a trans-dehydration via an enolate intermediate. This is 3-dehydroquinate dehydratase from Prochlorococcus marinus subsp. pastoris (strain CCMP1986 / NIES-2087 / MED4).